Consider the following 493-residue polypeptide: Galactose-1-phosphate uridylyltransferase (493 aa).

It belongs to the galactose-1-phosphate uridylyltransferase type 2 family.

It localises to the cytoplasm. It catalyses the reaction alpha-D-galactose 1-phosphate + UDP-alpha-D-glucose = alpha-D-glucose 1-phosphate + UDP-alpha-D-galactose. It participates in carbohydrate metabolism; galactose metabolism. This Lactococcus lactis subsp. cremoris (strain SK11) protein is Galactose-1-phosphate uridylyltransferase.